The following is a 62-amino-acid chain: MAKVCYFTGRKTVSGNNRSHAMNQTKRTVKPNLQKVTILVDGKPKKVWASARALKSGKVERV.

Belongs to the bacterial ribosomal protein bL28 family.

The sequence is that of Large ribosomal subunit protein bL28 from Streptococcus uberis (strain ATCC BAA-854 / 0140J).